The sequence spans 720 residues: Polyribonucleotide nucleotidyltransferase (720 aa).

Residues D487 and D493 each coordinate Mg(2+). Positions 554-613 (PRIETFKIPTDKIREVIGTGGKVIREIVEKTGAKVNIEDDGTVKVASSDGEAMKAAIKWI) constitute a KH domain. One can recognise an S1 motif domain in the interval 623–691 (GQIYDGTVVK…DRGKTRLSMK (69 aa)). A disordered region spans residues 699-720 (EDLEAKDKVAEGEKAPREAAGE). A compositionally biased stretch (basic and acidic residues) spans 701-720 (LEAKDKVAEGEKAPREAAGE).

The protein belongs to the polyribonucleotide nucleotidyltransferase family. It depends on Mg(2+) as a cofactor.

It localises to the cytoplasm. It catalyses the reaction RNA(n+1) + phosphate = RNA(n) + a ribonucleoside 5'-diphosphate. In terms of biological role, involved in mRNA degradation. Catalyzes the phosphorolysis of single-stranded polyribonucleotides processively in the 3'- to 5'-direction. In Bradyrhizobium diazoefficiens (strain JCM 10833 / BCRC 13528 / IAM 13628 / NBRC 14792 / USDA 110), this protein is Polyribonucleotide nucleotidyltransferase.